A 634-amino-acid polypeptide reads, in one-letter code: 1-deoxy-D-xylulose-5-phosphate synthase (634 aa).

Residues histidine 73 and 114–116 (GHS) contribute to the thiamine diphosphate site. Aspartate 145 contacts Mg(2+). Thiamine diphosphate-binding positions include 146–147 (GS), asparagine 174, phenylalanine 285, and glutamate 367. Asparagine 174 lines the Mg(2+) pocket.

It belongs to the transketolase family. DXPS subfamily. As to quaternary structure, homodimer. Mg(2+) serves as cofactor. It depends on thiamine diphosphate as a cofactor.

It catalyses the reaction D-glyceraldehyde 3-phosphate + pyruvate + H(+) = 1-deoxy-D-xylulose 5-phosphate + CO2. Its pathway is metabolic intermediate biosynthesis; 1-deoxy-D-xylulose 5-phosphate biosynthesis; 1-deoxy-D-xylulose 5-phosphate from D-glyceraldehyde 3-phosphate and pyruvate: step 1/1. Functionally, catalyzes the acyloin condensation reaction between C atoms 2 and 3 of pyruvate and glyceraldehyde 3-phosphate to yield 1-deoxy-D-xylulose-5-phosphate (DXP). In Syntrophotalea carbinolica (strain DSM 2380 / NBRC 103641 / GraBd1) (Pelobacter carbinolicus), this protein is 1-deoxy-D-xylulose-5-phosphate synthase.